Here is a 196-residue protein sequence, read N- to C-terminus: Ribonuclease H (196 aa).

The RNase H type-1 domain occupies 58 to 196 (LAKEEIIWES…GEIKADYGRK (139 aa)). Positions 71, 109, 132, and 192 each coordinate Mg(2+).

This sequence belongs to the RNase H family. The cofactor is Mn(2+). Mg(2+) is required as a cofactor.

The protein resides in the cytoplasm. It catalyses the reaction Endonucleolytic cleavage to 5'-phosphomonoester.. Functionally, endonuclease that specifically degrades the RNA of RNA-DNA hybrids. The sequence is that of Ribonuclease H (rnhA) from Halalkalibacterium halodurans (strain ATCC BAA-125 / DSM 18197 / FERM 7344 / JCM 9153 / C-125) (Bacillus halodurans).